We begin with the raw amino-acid sequence, 417 residues long: NADH-quinone oxidoreductase subunit D (417 aa).

It belongs to the complex I 49 kDa subunit family. In terms of assembly, NDH-1 is composed of 14 different subunits. Subunits NuoB, C, D, E, F, and G constitute the peripheral sector of the complex.

The protein resides in the cell inner membrane. The enzyme catalyses a quinone + NADH + 5 H(+)(in) = a quinol + NAD(+) + 4 H(+)(out). In terms of biological role, NDH-1 shuttles electrons from NADH, via FMN and iron-sulfur (Fe-S) centers, to quinones in the respiratory chain. The immediate electron acceptor for the enzyme in this species is believed to be ubiquinone. Couples the redox reaction to proton translocation (for every two electrons transferred, four hydrogen ions are translocated across the cytoplasmic membrane), and thus conserves the redox energy in a proton gradient. This Cupriavidus metallidurans (strain ATCC 43123 / DSM 2839 / NBRC 102507 / CH34) (Ralstonia metallidurans) protein is NADH-quinone oxidoreductase subunit D.